Reading from the N-terminus, the 1551-residue chain is Pentafunctional AROM polypeptide (1551 aa).

The segment at 1–379 (MSIEKVPILG…YQLKAHEVSK (379 aa)) is 3-dehydroquinate synthase. NAD(+) contacts are provided by residues 42 to 44 (DTN), 80 to 83 (ENNK), 111 to 113 (GGV), and D116. Residue R127 participates in 7-phospho-2-dehydro-3-deoxy-D-arabino-heptonate binding. 136–137 (TT) contributes to the NAD(+) binding site. 7-phospho-2-dehydro-3-deoxy-D-arabino-heptonate-binding residues include D143 and K149. K158 lines the NAD(+) pocket. N159 contributes to the 7-phospho-2-dehydro-3-deoxy-D-arabino-heptonate binding site. NAD(+) is bound by residues 176–179 (YLES) and N187. Zn(2+) is bound at residue E191. Residues 191-194 (EVVK) and K243 contribute to the 7-phospho-2-dehydro-3-deoxy-D-arabino-heptonate site. Residue E253 is the Proton acceptor; for 3-dehydroquinate synthase activity of the active site. 7-phospho-2-dehydro-3-deoxy-D-arabino-heptonate contacts are provided by residues 257–261 (RNLLN) and H264. H264 is a Zn(2+) binding site. The active-site Proton acceptor; for 3-dehydroquinate synthase activity is H268. The 7-phospho-2-dehydro-3-deoxy-D-arabino-heptonate site is built by H280 and K351. Zn(2+) is bound at residue H280. Residues 392–838 (VHPFKQPPQE…WDILHSKFNI (447 aa)) form an EPSP synthase region. Residues 858–1048 (DKSIIIIGMR…IPSGRSAALS (191 aa)) form a shikimate kinase region. ATP is bound at residue 865-872 (GMRGTGKS). The 3-dehydroquinase stretch occupies residues 1049 to 1258 (LTVPDLNAIS…NEDGLLTIKE (210 aa)). K1194 functions as the Schiff-base intermediate with substrate; for 3-dehydroquinate dehydratase activity in the catalytic mechanism. Residues 1271–1551 (AKKFWVIGSP…DVIHRAVVEE (281 aa)) form a shikimate dehydrogenase region.

It in the N-terminal section; belongs to the sugar phosphate cyclases superfamily. Dehydroquinate synthase family. In the 2nd section; belongs to the EPSP synthase family. This sequence in the 3rd section; belongs to the shikimate kinase family. The protein in the 4th section; belongs to the type-I 3-dehydroquinase family. It in the C-terminal section; belongs to the shikimate dehydrogenase family. In terms of assembly, homodimer. Zn(2+) serves as cofactor.

The protein resides in the cytoplasm. The catalysed reaction is 7-phospho-2-dehydro-3-deoxy-D-arabino-heptonate = 3-dehydroquinate + phosphate. It catalyses the reaction 3-dehydroquinate = 3-dehydroshikimate + H2O. The enzyme catalyses shikimate + NADP(+) = 3-dehydroshikimate + NADPH + H(+). It carries out the reaction shikimate + ATP = 3-phosphoshikimate + ADP + H(+). The catalysed reaction is 3-phosphoshikimate + phosphoenolpyruvate = 5-O-(1-carboxyvinyl)-3-phosphoshikimate + phosphate. It functions in the pathway metabolic intermediate biosynthesis; chorismate biosynthesis; chorismate from D-erythrose 4-phosphate and phosphoenolpyruvate: step 2/7. The protein operates within metabolic intermediate biosynthesis; chorismate biosynthesis; chorismate from D-erythrose 4-phosphate and phosphoenolpyruvate: step 3/7. It participates in metabolic intermediate biosynthesis; chorismate biosynthesis; chorismate from D-erythrose 4-phosphate and phosphoenolpyruvate: step 4/7. Its pathway is metabolic intermediate biosynthesis; chorismate biosynthesis; chorismate from D-erythrose 4-phosphate and phosphoenolpyruvate: step 5/7. It functions in the pathway metabolic intermediate biosynthesis; chorismate biosynthesis; chorismate from D-erythrose 4-phosphate and phosphoenolpyruvate: step 6/7. In terms of biological role, the AROM polypeptide catalyzes 5 consecutive enzymatic reactions in prechorismate polyaromatic amino acid biosynthesis. The chain is Pentafunctional AROM polypeptide from Candida tropicalis (strain ATCC MYA-3404 / T1) (Yeast).